A 339-amino-acid chain; its full sequence is UDP-3-O-acylglucosamine N-acyltransferase (339 aa).

His-238 functions as the Proton acceptor in the catalytic mechanism.

This sequence belongs to the transferase hexapeptide repeat family. LpxD subfamily. As to quaternary structure, homotrimer.

It catalyses the reaction a UDP-3-O-[(3R)-3-hydroxyacyl]-alpha-D-glucosamine + a (3R)-hydroxyacyl-[ACP] = a UDP-2-N,3-O-bis[(3R)-3-hydroxyacyl]-alpha-D-glucosamine + holo-[ACP] + H(+). The protein operates within bacterial outer membrane biogenesis; LPS lipid A biosynthesis. Its function is as follows. Catalyzes the N-acylation of UDP-3-O-acylglucosamine using 3-hydroxyacyl-ACP as the acyl donor. Is involved in the biosynthesis of lipid A, a phosphorylated glycolipid that anchors the lipopolysaccharide to the outer membrane of the cell. In Aeromonas hydrophila subsp. hydrophila (strain ATCC 7966 / DSM 30187 / BCRC 13018 / CCUG 14551 / JCM 1027 / KCTC 2358 / NCIMB 9240 / NCTC 8049), this protein is UDP-3-O-acylglucosamine N-acyltransferase.